Reading from the N-terminus, the 367-residue chain is Transcription factor aptf-2 (367 aa).

The disordered stretch occupies residues 29 to 49 (VPATKETGPSSSAECSTQPAV). Positions 36–47 (GPSSSAECSTQP) are enriched in polar residues. The segment at 220 to 354 (AKQKAFPNKV…GVASELRRLT (135 aa)) is H-S-H (helix-span-helix), dimerization.

It belongs to the AP-2 family. In terms of assembly, binds DNA as a dimer.

It is found in the nucleus. The protein localises to the cytoplasm. Its function is as follows. Sequence-specific DNA-binding protein that interacts with enhancer elements to regulate transcription of selected genes. Required for neuroblast and epidermal morphogenesis, perhaps acting in cooperation with transcription factor aptf-4. The sequence is that of Transcription factor aptf-2 from Caenorhabditis elegans.